Here is a 112-residue protein sequence, read N- to C-terminus: Putative transposase YkgN (112 aa).

The protein belongs to the transposase 8 family.

The polypeptide is Putative transposase YkgN (ykgN) (Escherichia coli (strain K12)).